Reading from the N-terminus, the 1486-residue chain is Chromosome partition protein MukB (1486 aa).

Position 34-41 (34-41) interacts with ATP; the sequence is GGNGAGKS. Coiled-coil stretches lie at residues 326–418, 444–480, and 509–603; these read LEAD…QYNQ, LETF…QAYQ, and RHLA…RAPV. A flexible hinge region spans residues 666 to 783; it reads PGGSEDQRLN…EVPLFGRAAR (118 aa). Coiled-coil stretches lie at residues 835-923, 977-1115, and 1209-1266; these read EAEI…AKLE, EMLS…TAKA, and VEAI…QNVS.

The protein belongs to the SMC family. MukB subfamily. As to quaternary structure, homodimerization via its hinge domain. Binds to DNA via its C-terminal region. Interacts, and probably forms a ternary complex, with MukE and MukF via its C-terminal region. The complex formation is stimulated by calcium or magnesium. Interacts with tubulin-related protein FtsZ.

It localises to the cytoplasm. It is found in the nucleoid. Functionally, plays a central role in chromosome condensation, segregation and cell cycle progression. Functions as a homodimer, which is essential for chromosome partition. Involved in negative DNA supercoiling in vivo, and by this means organize and compact chromosomes. May achieve or facilitate chromosome segregation by condensation DNA from both sides of a centrally located replisome during cell division. This is Chromosome partition protein MukB from Escherichia coli O9:H4 (strain HS).